Reading from the N-terminus, the 523-residue chain is Synaptotagmin-10 (523 aa).

The Vesicular portion of the chain corresponds to 1–55; the sequence is MSFRKEDGVSSLCQKALHIITELCFAGQVEWDKCSGIFPADRSGQGGGGTDISVS. Positions 13 to 35 are cysteine motif; sequence CQKALHIITELCFAGQVEWDKCS. The helical transmembrane segment at 56-76 threads the bilayer; that stretch reads LLAVVVSFCGLALLVVSLFVF. The Cytoplasmic segment spans residues 77-523; that stretch reads WKLCWPCWKS…CSSPRPPSTP (447 aa). At threonine 136 the chain carries Phosphothreonine. C2 domains are found at residues 231-352 and 363-496; these read TCGK…TVWK and DLGE…THWH. Residues aspartate 262, aspartate 268, aspartate 320, phenylalanine 321, aspartate 322, serine 325, aspartate 328, aspartate 394, aspartate 400, aspartate 454, and aspartate 456 each coordinate Ca(2+).

Belongs to the synaptotagmin family. Homodimer; disulfide-linked via the cysteine motif. Can also form heterodimers with SYT3, SYT6, SYT7 and SYT9. The cofactor is Ca(2+).

The protein localises to the cytoplasmic vesicle. Its subcellular location is the secretory vesicle membrane. In terms of biological role, ca(2+) sensor specifically required for the Ca(2+)-dependent exocytosis of secretory vesicles containing IGF1 in neurons of the olfactory bulb. Exocytosis of IGF1 is required for sensory perception of smell. Not involved in Ca(2+)-dependent synaptic vesicle exocytosis. Acts through Ca(2+) and phospholipid binding to the C2 domain: Ca(2+) induces binding of the C2-domains to phospholipid membranes and to assembled SNARE-complexes; both actions contribute to triggering exocytosis. In Rattus norvegicus (Rat), this protein is Synaptotagmin-10 (Syt10).